A 492-amino-acid polypeptide reads, in one-letter code: ATP synthase subunit beta, chloroplastic (492 aa).

170-177 (GGAGVGKT) provides a ligand contact to ATP.

Belongs to the ATPase alpha/beta chains family. F-type ATPases have 2 components, CF(1) - the catalytic core - and CF(0) - the membrane proton channel. CF(1) has five subunits: alpha(3), beta(3), gamma(1), delta(1), epsilon(1). CF(0) has four main subunits: a(1), b(1), b'(1) and c(9-12).

It localises to the plastid. Its subcellular location is the chloroplast thylakoid membrane. It catalyses the reaction ATP + H2O + 4 H(+)(in) = ADP + phosphate + 5 H(+)(out). Produces ATP from ADP in the presence of a proton gradient across the membrane. The catalytic sites are hosted primarily by the beta subunits. The polypeptide is ATP synthase subunit beta, chloroplastic (Psilotum nudum (Whisk fern)).